The sequence spans 74 residues: Large ribosomal subunit protein uL29 (74 aa).

This sequence belongs to the universal ribosomal protein uL29 family.

This Streptomyces avermitilis (strain ATCC 31267 / DSM 46492 / JCM 5070 / NBRC 14893 / NCIMB 12804 / NRRL 8165 / MA-4680) protein is Large ribosomal subunit protein uL29.